A 408-amino-acid polypeptide reads, in one-letter code: WD repeat-containing protein JIP5 (408 aa).

WD repeat units lie at residues 5–44 (PVGS…DSHN), 50–86 (PSKR…TTDI), 87–130 (DARS…SVKT), 133–172 (QHFD…PKVV), 177–216 (DQED…GDCV), and 221–267 (GHPL…FLGV). Residues 311 to 408 (VDSDEEEDDE…VIDKDFFDGL (98 aa)) are disordered. Composition is skewed to acidic residues over residues 313–339 (SDEE…EDEE) and 356–366 (DESDDEDEEME). Residues 396 to 408 (KETVIDKDFFDGL) show a composition bias toward basic and acidic residues.

Belongs to the WD repeat WDR55 family.

It is found in the nucleus. The protein localises to the nucleolus. This is WD repeat-containing protein JIP5 (JIP5) from Coprinopsis cinerea (strain Okayama-7 / 130 / ATCC MYA-4618 / FGSC 9003) (Inky cap fungus).